We begin with the raw amino-acid sequence, 1809 residues long: MSLGELLETCRSRRIELWSEAGRLRYRAPQGALDAGLAERLRAEREALLEHLEGGPGWRAEPDMAHQRFPLTPVQAAYVLGRQAAFDYGGNACQLYAEYDWPADTDPARLEAAWNAMVERHPMLRAVIEDNAWQRVLPEVPWQRLTVHACAGLDEAAFQAHLERVRERLDHACAALDQWPVLRPELSIGRDACVLHCSVDFTLVDYASLQLLLGEWRRRYLDPQWTAEPLEATFRDYVGVEQRRRQSPAWQRDRDWWLARLDALPGRPDLPLRVQPDTRSTRFRHFHARLDEAAWQALGARAGEHGLSAAGVALAAFAETIGRWSQAPAFCLNLTVLNRPPLHPQLAQVLGDFTALSLLAVDSRHGDSFVERARRIGEQMFDDLDHPTFSGVDLLRELARRRGRGADLMPVVFTSGIGSVQRLLGDGEAPRAPRYMISQTPQVWLDCQVTDQFGGLEIGWDVRLGLFPEGQAEAMFDDFVGLLRRLAQSPRAWTDGDATEPVEAPPQALPGSARSIAAGFAERALLTPDATAIHDAAGSYSYRQVAQHASALRRVLEAHGAGRGRRVAVMLPKSAAQLVAVIGILQAGAAYVPVDIRQPPLRRQAILASAEVVALVCLESDVPDVGCACVAIDRLAADSAWPPPPAAEVAADDLAYVIYTSGSTGTPKGVMLSHAAVSNTLLDINQRYGVDANDRVLGLAELSFDLSVYDFFGATAAGAQVVLPDPARGSDPSHWAELLERHAITLWNSVPAQGQMLIDYLESEPQRHLPGPRCVLWSGDWIPVSLPTRWWRRWPDSALFSLGGATEAAIWSIEQPIRPQHTELASIPYGRALRGQSVEVLDARGRRCPPGVRGEIHIGGVGLALGYAGDPQRTAERFVRHPDGRRLYRTGDLGRYLADGSIEFLGREDDQVKIRGHRIELAELDAALCAHPQVNLAATVVLGETHERSLASFVTLHAPVEAGEDPRTALDAVRQRAAQALRRDWGSEEGIAAAVAALDRACLASLAAWLAGSGLFASATPLDLATLCQRLGIAEARQRLLRHWLRQLEEGGYLRAEGEGWLGCAERPAQSPEDAWTAFAGCAPAALWPAELVAYLRDSAQSLGEQLAGRISPAALMFPQGSARIAEAMYSQGLHAQALHEAMAEAIAAIVERQPQRRWRLLELGAGTAAASRTVIARLAPLVQRGAEVDYLFTDVSSYFLAAARERFADQPWVRFGRFDMNGDLLDQGVAPHSVDILLSSGALNNALDTPALLAGLRELLSADAWLVIQELTREHNEISVSQSLMMENPRDLRDERRQLFVHTGQWLEWLAAQGGDLACGVVPPGSALDLLGYDVLLARCKTDRARLEPAELLAFVEARVPRYMLPAQLRVLERLPVTGNGKIDRKALTGFARQPQADLRHGVAQAPADELENALLALWREVLDNPSLGVEQDFFGAGGDSLLIAQLIARLRERLESARRHPFDRLLRWALSQPTPRGLAERLRSAPEEGRGPALAAARGVAPAPAGMSRAPLAEGAVALDPLVRLVPGEGVPRVLVHEGLGTLLPYRPLLRALGEGRPLLGLAVHDSDAYLAIPAEHLNACLGRRYAEALHRAGLREVDLLGYCSGGLVALETAKSLVQRGVRVRQLDIVSSYRIPYRVDDERLLLFSFAATLGLDTAALGFPAPERLGQAVQAALAQTPERLVAEALAGLPGLADLVALRGRVLQAASGSADAVSVERDTLYRLFCHSVRASQAEAPEPYVGALRLFVPDAGNPLVPRYAEALETQWRAAALGACGIHEVPGGHFDCLGEALAQSLSKPMPEEASR.

Positions 69–490 (FPLTPVQAAY…GLLRRLAQSP (422 aa)) are condensation/cyclization. Residues 520 to 915 (FAERALLTPD…GREDDQVKIR (396 aa)) form an adenylation region. The Carrier domain occupies 1407 to 1488 (APADELENAL…GLAERLRSAP (82 aa)). At Ser1442 the chain carries O-(pantetheine 4'-phosphoryl)serine. The tract at residues 1584–1797 (LGRRYAEALH…FDCLGEALAQ (214 aa)) is thioesterase.

This sequence belongs to the NRP synthetase family. It depends on pantetheine 4'-phosphate as a cofactor.

It carries out the reaction holo-[peptidyl-carrier protein] + L-cysteine + ATP = L-cysteinyl-[peptidyl-carrier protein] + AMP + diphosphate. The protein operates within siderophore biosynthesis. Its function is as follows. Involved in the biosynthesis of the siderophore pyochelin. Adenylates L-cysteine and loads it onto its peptidyl carrier domain via a thioester linkage to the phosphopanthetheine moiety. Then forms a peptide bond between the salicyl-thiazolinyl intermediate bound to the second carrier domain of PchE and the cysteine bound to its own peptidyl carrier domain to form the salicyl-thiazolinyl-cysteinyl-S-PCP2 intermediate. It subsequently cyclizes the C-terminal cysteine to form the second thiazoline heterocycle in the salicyl-thiazolinyl-thiazolinyl-S-PCP2 intermediate. When this intermediate is released by the action of a thioesterase, it produces the tricyclic acid hydroxyphenyl-thiazolyl-thiazolinyl-carboxylic acid (HPTT-COOH), an advanced intermediate containing the aryl-4,2-bis-heterocyclic skeleton of the bithiazoline class of siderophores. In Pseudomonas aeruginosa (strain ATCC 15692 / DSM 22644 / CIP 104116 / JCM 14847 / LMG 12228 / 1C / PRS 101 / PAO1), this protein is Pyochelin synthetase PchF.